The chain runs to 321 residues: Mas-related G-protein coupled receptor member H (321 aa).

The Extracellular segment spans residues 1–35; sequence MEPLAMTLYPLESTQPTRNKTPNETTWSSEHTDDH. An N-linked (GlcNAc...) asparagine glycan is attached at Asn23. The helical transmembrane segment at 36-56 threads the bilayer; the sequence is TYFLVSLVICSLGLAGNGLLI. The Cytoplasmic portion of the chain corresponds to 57 to 71; that stretch reads WFLIFCIKRKPFTIY. Residues 72 to 92 traverse the membrane as a helical segment; it reads ILHLAIADFMVLLCSSIMKLV. At 93–102 the chain is on the extracellular side; it reads NTFHIYNMTL. Asn99 carries N-linked (GlcNAc...) asparagine glycosylation. A helical membrane pass occupies residues 103-126; that stretch reads ESYAILFMIFGYNTGLHLLTAISV. Over 127-147 the chain is Cytoplasmic; sequence ERCLSVLYPIWYQCQRPKHQS. Residues 148-168 traverse the membrane as a helical segment; it reads AVACMLLWALSVLVSGLENFF. At 169-188 the chain is on the extracellular side; the sequence is CILEVKPQFPECRYVYIFSC. Residues 189–209 traverse the membrane as a helical segment; the sequence is ILTFLVFVPLMIFSNLILFIQ. At 210–225 the chain is on the cytoplasmic side; that stretch reads VCCNLKPRQPTKLYVI. Residues 226 to 246 traverse the membrane as a helical segment; that stretch reads IMTTVILFLVFAMPMKVLLII. Gly247 is a topological domain (extracellular). The chain crosses the membrane as a helical span at residues 248–271; sequence YYSSSLDDSVWDSLPYLNMLSTIN. The Cytoplasmic portion of the chain corresponds to 272-320; sequence CSINPIVYFVVGSLRRKRSRKSLKEALQKVFEEKPVVASRENVTQFSLP.

The protein belongs to the G-protein coupled receptor 1 family. Mas subfamily.

Its subcellular location is the cell membrane. Its function is as follows. Orphan receptor. May regulate nociceptor function and/or development, including the sensation or modulation of pain. The chain is Mas-related G-protein coupled receptor member H (Mrgprh) from Mus musculus (Mouse).